The following is a 368-amino-acid chain: Glycolate oxidase 3 (368 aa).

N-acetylmethionine is present on Met-1. The region spanning 1 to 359 (MEITNVMEYE…SRTHIKTDWD (359 aa)) is the FMN hydroxy acid dehydrogenase domain. Tyr-24 provides a ligand contact to glyoxylate. FMN-binding positions include 77–79 (PTA), Ser-106, 127–129 (QLY), and Thr-155. Position 129 (Tyr-129) interacts with glyoxylate. Arg-164 is a glyoxylate binding site. 2 residues coordinate FMN: Lys-230 and Ser-252. Positions 254 and 257 each coordinate glyoxylate. The Proton acceptor role is filled by His-254. Residues 285-289 (DGGVR) and 308-309 (GR) contribute to the FMN site.

The protein belongs to the FMN-dependent alpha-hydroxy acid dehydrogenase family. In terms of assembly, homotetramer. Requires FMN as cofactor.

It is found in the peroxisome. The catalysed reaction is glycolate + O2 = glyoxylate + H2O2. The protein operates within photosynthesis; photorespiration; glycine from 2-phosphoglycolate: step 2/3. In terms of biological role, catalyzes the oxidation of glycolate to glyoxylate, with a reduction of O2 to H2O2. Is a key enzyme in photorespiration in green plants. The protein is Glycolate oxidase 3 (GLO5) of Arabidopsis thaliana (Mouse-ear cress).